The sequence spans 526 residues: Bifunctional purine biosynthesis protein PurH (526 aa).

An MGS-like domain is found at 1 to 147 (MSVIKRALIS…KNWKHVAIVT (147 aa)).

The protein belongs to the PurH family.

It carries out the reaction (6R)-10-formyltetrahydrofolate + 5-amino-1-(5-phospho-beta-D-ribosyl)imidazole-4-carboxamide = 5-formamido-1-(5-phospho-D-ribosyl)imidazole-4-carboxamide + (6S)-5,6,7,8-tetrahydrofolate. The catalysed reaction is IMP + H2O = 5-formamido-1-(5-phospho-D-ribosyl)imidazole-4-carboxamide. It functions in the pathway purine metabolism; IMP biosynthesis via de novo pathway; 5-formamido-1-(5-phospho-D-ribosyl)imidazole-4-carboxamide from 5-amino-1-(5-phospho-D-ribosyl)imidazole-4-carboxamide (10-formyl THF route): step 1/1. It participates in purine metabolism; IMP biosynthesis via de novo pathway; IMP from 5-formamido-1-(5-phospho-D-ribosyl)imidazole-4-carboxamide: step 1/1. The sequence is that of Bifunctional purine biosynthesis protein PurH from Neisseria gonorrhoeae (strain NCCP11945).